A 356-amino-acid chain; its full sequence is tRNA N6-adenosine threonylcarbamoyltransferase (356 aa).

Residues His115 and His119 each contribute to the Fe cation site. Residues Leu138–Gly142, Asp171, Gly184, and Asn283 each bind substrate. Asp311 is a Fe cation binding site.

This sequence belongs to the KAE1 / TsaD family. Fe(2+) is required as a cofactor.

Its subcellular location is the cytoplasm. The catalysed reaction is L-threonylcarbamoyladenylate + adenosine(37) in tRNA = N(6)-L-threonylcarbamoyladenosine(37) in tRNA + AMP + H(+). Required for the formation of a threonylcarbamoyl group on adenosine at position 37 (t(6)A37) in tRNAs that read codons beginning with adenine. Is involved in the transfer of the threonylcarbamoyl moiety of threonylcarbamoyl-AMP (TC-AMP) to the N6 group of A37, together with TsaE and TsaB. TsaD likely plays a direct catalytic role in this reaction. This Prochlorococcus marinus (strain MIT 9515) protein is tRNA N6-adenosine threonylcarbamoyltransferase.